Consider the following 942-residue polypeptide: DNA polymerase I (942 aa).

Residues Glu177–Asp269 enclose the 5'-3' exonuclease domain. One can recognise a 3'-5' exonuclease domain in the interval Thr340–Glu522.

Belongs to the DNA polymerase type-A family. Single-chain monomer with multiple functions.

The enzyme catalyses DNA(n) + a 2'-deoxyribonucleoside 5'-triphosphate = DNA(n+1) + diphosphate. Functionally, in addition to polymerase activity, this DNA polymerase exhibits 3'-5' and 5'-3' exonuclease activity. The sequence is that of DNA polymerase I (polA) from Chloroflexus aurantiacus (strain ATCC 29366 / DSM 635 / J-10-fl).